A 453-amino-acid polypeptide reads, in one-letter code: Glutamyl-tRNA reductase (453 aa).

Residues 49–52, Ser-109, 114–116, and Gln-120 contribute to the substrate site; these read TCNR and EQQ. Cys-50 acts as the Nucleophile in catalysis. NADP(+) is bound at residue 191 to 196; that stretch reads GAGSMG. The disordered stretch occupies residues 432-453; sequence PAAVATPTDLVDGDRTGRDLQA. A compositionally biased stretch (basic and acidic residues) spans 443 to 453; the sequence is DGDRTGRDLQA.

This sequence belongs to the glutamyl-tRNA reductase family. In terms of assembly, homodimer.

The catalysed reaction is (S)-4-amino-5-oxopentanoate + tRNA(Glu) + NADP(+) = L-glutamyl-tRNA(Glu) + NADPH + H(+). It participates in porphyrin-containing compound metabolism; protoporphyrin-IX biosynthesis; 5-aminolevulinate from L-glutamyl-tRNA(Glu): step 1/2. Functionally, catalyzes the NADPH-dependent reduction of glutamyl-tRNA(Glu) to glutamate 1-semialdehyde (GSA). This is Glutamyl-tRNA reductase from Rhodococcus erythropolis (strain PR4 / NBRC 100887).